The sequence spans 188 residues: MEGGGGSGDKTTGVLAGFFGAGEAGYSHADLAGVPLTGMNPLCPYLNVDPRYLVQDTDEFILPTGANKTWGRFELAFFTIGGCCMTGAAFGAMNGLRLGLKETQNMAWSKPGNVQILNMVTRQGALWANTLGSLALLYSAFGVIIEKTRGAEDDLNTVAAGTMTGMLYKCTVSEMALDSPFCVLLSGS.

2 helical membrane passes run 73–93 (FELA…FGAM) and 125–145 (ALWA…GVII).

This sequence belongs to the Tim17/Tim22/Tim23 family.

The protein resides in the mitochondrion inner membrane. In terms of biological role, may participate in the translocation of transit peptide-containing proteins across the mitochondrial inner membrane. the PAM complex. In Homo sapiens (Human), this protein is Mitochondrial import inner membrane translocase subunit Tim23B.